A 110-amino-acid chain; its full sequence is MQPGGQPDMSALLAQAQQMQQQLMEAQESLANSEVHGQAGGGLVQVTMKGSGEVTSVAIDPKVVDPDDVETLQDLVVGAIADAAKQVTILAHDRLGPLAGGMGGLGIPGL.

This sequence belongs to the YbaB/EbfC family. As to quaternary structure, homodimer.

Its subcellular location is the cytoplasm. It localises to the nucleoid. Functionally, binds to DNA and alters its conformation. May be involved in regulation of gene expression, nucleoid organization and DNA protection. The chain is Nucleoid-associated protein Mkms_4993 from Mycobacterium sp. (strain KMS).